A 367-amino-acid chain; its full sequence is RNA-binding protein 48 (367 aa).

Residues Gln46–Glu124 form the RRM domain. Disordered regions lie at residues Pro217–Ser243, Gln280–Pro302, and Ser343–Ile367. Over residues Pro347–Thr357 the composition is skewed to basic and acidic residues.

It belongs to the RBM48 family. In terms of assembly, component of the minor spliceosome. Within this complex, interacts with ARMC7 and PRPF8/PRP8.

Its function is as follows. As a component of the minor spliceosome, involved in the splicing of U12-type introns in pre-mRNAs. The sequence is that of RNA-binding protein 48 (RBM48) from Homo sapiens (Human).